We begin with the raw amino-acid sequence, 334 residues long: Eukaryotic translation initiation factor 3 subunit H (334 aa).

The MPN domain occupies 20–152 (VQCDGLAAMK…LKAYRLTPQA (133 aa)).

Belongs to the eIF-3 subunit H family. Component of the eukaryotic translation initiation factor 3 (eIF-3) complex.

Its subcellular location is the cytoplasm. Component of the eukaryotic translation initiation factor 3 (eIF-3) complex, which is involved in protein synthesis of a specialized repertoire of mRNAs and, together with other initiation factors, stimulates binding of mRNA and methionyl-tRNAi to the 40S ribosome. The eIF-3 complex specifically targets and initiates translation of a subset of mRNAs involved in cell proliferation. The chain is Eukaryotic translation initiation factor 3 subunit H from Anopheles gambiae (African malaria mosquito).